A 199-amino-acid chain; its full sequence is Protein-L-isoaspartate O-methyltransferase (199 aa).

Ser51 is an active-site residue.

The protein belongs to the methyltransferase superfamily. L-isoaspartyl/D-aspartyl protein methyltransferase family.

It localises to the cytoplasm. The catalysed reaction is [protein]-L-isoaspartate + S-adenosyl-L-methionine = [protein]-L-isoaspartate alpha-methyl ester + S-adenosyl-L-homocysteine. Its function is as follows. Catalyzes the methyl esterification of L-isoaspartyl residues in peptides and proteins that result from spontaneous decomposition of normal L-aspartyl and L-asparaginyl residues. It plays a role in the repair and/or degradation of damaged proteins. The protein is Protein-L-isoaspartate O-methyltransferase of Fervidobacterium nodosum (strain ATCC 35602 / DSM 5306 / Rt17-B1).